A 587-amino-acid chain; its full sequence is Vesicular glutamate transporter 2.2 (587 aa).

Over 1 to 71 (MDTVKERVLA…CTCFGLPRRY (71 aa)) the chain is Cytoplasmic. The helical transmembrane segment at 72–92 (IIAIMSGLGFCISFGIRCNLG) threads the bilayer. At 93-125 (VAIVDMVNNSTIHKGGKIIIKGKAKFNWDPETV) the chain is on the vesicular side. 2 N-linked (GlcNAc...) asparagine glycosylation sites follow: Asn100 and Asn101. Residues 126-146 (GMIHGSFFWGYTVTQIPGGYI) form a helical membrane-spanning segment. Residues 147–149 (SSR) lie on the Cytoplasmic side of the membrane. The helical transmembrane segment at 150-170 (LAANRVFGAAILLTSTLNMFI) threads the bilayer. Residues 171 to 180 (PSAARVHYGC) lie on the Vesicular side of the membrane. A helical transmembrane segment spans residues 181–203 (VMFVRILQGLVEGVTYPACHGIW). Residues 204-217 (SKWAPPLERSRLAT) are Cytoplasmic-facing. Residues 218–238 (TSFCGSYAGAVVAMPLAGILV) form a helical membrane-spanning segment. At 239–245 (QYSGWSS) the chain is on the vesicular side. A helical transmembrane segment spans residues 246–266 (VFYIYGSFGIVWYMFWILVSY). Residues 267 to 311 (ESPADHPTITDEERTYIEESIGESAKLLGAMEKYKTPWRKFFTSM) lie on the Cytoplasmic side of the membrane. The chain crosses the membrane as a helical span at residues 312-332 (PVYAIIVANFCRSWTFYLLLI). The Vesicular portion of the chain corresponds to 333-350 (SQPAYFEEVFGFEISKVG). The helical transmembrane segment at 351 to 371 (MVSALPHLVMTIIVPIGGQLA) threads the bilayer. Topologically, residues 372–387 (DYLRSKNILTTTTVRK) are cytoplasmic. A helical transmembrane segment spans residues 388 to 408 (IMNCGGFGMEATLLLVVGFSH). At 409–410 (SK) the chain is on the vesicular side. A helical membrane pass occupies residues 411–431 (GVAISFLVLAVGFSGFAISGF). The Cytoplasmic portion of the chain corresponds to 432–444 (NVNHLDIAPRYAS). A helical transmembrane segment spans residues 445–465 (ILMGISNGVGTLSGMVCPLIV). Residues 466–479 (GAMTKNKTREEWQN) are Vesicular-facing. Asn471 carries an N-linked (GlcNAc...) asparagine glycan. A helical membrane pass occupies residues 480–500 (VFLIASLVHYGGVIFYGIFAS). Residues 501–587 (GEKQPWADPE…ERTYTGDGYS (87 aa)) are Cytoplasmic-facing.

It belongs to the major facilitator superfamily. Sodium/anion cotransporter family. VGLUT subfamily. In terms of tissue distribution, expressed in spinal cord.

It is found in the cytoplasmic vesicle. The protein resides in the secretory vesicle. The protein localises to the synaptic vesicle membrane. It localises to the membrane. Its subcellular location is the synapse. It is found in the synaptosome. The protein resides in the cell membrane. The enzyme catalyses L-glutamate(out) = L-glutamate(in). The catalysed reaction is 3 Na(+)(out) + phosphate(out) = 3 Na(+)(in) + phosphate(in). It catalyses the reaction phosphate(in) = phosphate(out). It carries out the reaction K(+)(in) + H(+)(out) = K(+)(out) + H(+)(in). The enzyme catalyses chloride(in) = chloride(out). With respect to regulation, chloride channel activity is allosterically activated by lumenal H(+) and Cl(-) leading to synaptic vesicles acidification. The L-glutamate transport activity is allosterically activated by lumenal H(+) and Cl(-). The allosteric requirement for H(+) efficiently prevents non-vesicular efflux across the plasma membrane. The L-glutamate uniporter activity exhibits a biphasic dependence on chloride concentration. Multifunctional transporter that transports L-glutamate as well as multiple ions such as chloride, proton, potassium, sodium and phosphate. At the synaptic vesicle membrane, mainly functions as a uniporter which transports preferentially L-glutamate but also, phosphate from the cytoplasm into synaptic vesicles at presynaptic nerve terminals of excitatory neural cells. The L-glutamate or phosphate uniporter activity is electrogenic and is driven by the proton electrochemical gradient, mainly by the electrical gradient established by the vacuolar H(+)-ATPase across the synaptic vesicle membrane. In addition, functions as a chloride channel that allows a chloride permeation through the synaptic vesicle membrane therefore affects the proton electrochemical gradient and promotes synaptic vesicles acidification. Moreover, functions as a vesicular K(+)/H(+) antiport allowing to maintain the electrical gradient and to decrease chemical gradient and therefore sustain vesicular L-glutamate uptake. The vesicular H(+)/H(+) antiport activity is electroneutral. At the plasma membrane, following exocytosis, functions as a symporter of Na(+) and phosphate from the extracellular space to the cytoplasm allowing synaptic phosphate homeostasis regulation. The symporter activity is driven by an inside negative membrane potential and is electrogenic. Also involved in the regulation of retinal hyaloid vessel regression during postnatal development. May also play a role in the endocrine L-glutamatergic system of other tissues such as pineal gland and pancreas. The sequence is that of Vesicular glutamate transporter 2.2 (slc17a6a) from Danio rerio (Zebrafish).